Reading from the N-terminus, the 258-residue chain is Regulatory protein RecX (258 aa).

This sequence belongs to the RecX family.

Its subcellular location is the cytoplasm. Functionally, modulates RecA activity. The sequence is that of Regulatory protein RecX from Streptococcus gordonii (strain Challis / ATCC 35105 / BCRC 15272 / CH1 / DL1 / V288).